A 344-amino-acid polypeptide reads, in one-letter code: Dihydroorotase (344 aa).

Zn(2+) contacts are provided by His13 and His15. Residues 15–17 (HLR) and Asn41 each bind substrate. Zn(2+)-binding residues include Lys98, His135, and His173. Lys98 is modified (N6-carboxylysine). Substrate is bound at residue His135. Position 218 (Leu218) interacts with substrate. Asp247 is a Zn(2+) binding site. Asp247 is a catalytic residue. Substrate contacts are provided by His251 and Ala263.

This sequence belongs to the metallo-dependent hydrolases superfamily. DHOase family. Class II DHOase subfamily. In terms of assembly, homodimer. It depends on Zn(2+) as a cofactor.

The catalysed reaction is (S)-dihydroorotate + H2O = N-carbamoyl-L-aspartate + H(+). It functions in the pathway pyrimidine metabolism; UMP biosynthesis via de novo pathway; (S)-dihydroorotate from bicarbonate: step 3/3. In terms of biological role, catalyzes the reversible cyclization of carbamoyl aspartate to dihydroorotate. The chain is Dihydroorotase from Neisseria meningitidis serogroup C (strain 053442).